The chain runs to 617 residues: MYPLRSKVTTVGRQASGARALWRATGSKESDFGKPIVAIANSFTQFVPGHVHLKNVGDIVADAVREAGGVPKEFNTIAVDDGIAMGHSGMLYSLPSREIISDSIEYMVNAHTADALVCISNCDKITPGMLNAALRLNIPTIFVSGGPMEAGKAVVVDGVAHAPTDLITAITASASDAVSDEGLTRVEESACPTCGSCSGMFTANSMNCLTEALGLALPGNGTTLATHSARRDLFEQAGRTIVDLCRRYYGEEDDAVLPRSIATKEAFSNAMALDMAMGGSTNTILHTLAAAQEGEVDFTLEDINEISYRVPCLSKVAPNGTYHIEDVHRAGGIPAILGELRRAGHLNLKVHTALYDNAEEWLDDWDIRGGKATEAALELFHAAPGGVRTTEPFSQSNRWDELDTDAANGCIHDAERAFSSDGGLVVLRGNLAPNGAIVKAAGVEEELWTFTGPARVVESQEEAVSIILKKEVQPGDVIVIRYEGPAGGPGMQEMLHPTSFLKGSGLGKACALITDGRFSGGTSGLSIGHISPEAAHGGLIGLVENGDPITINIRERQLTLDVDEEVLERRRATEEQREKPWTPKERNRPVTKALRAYANMATSADRGAVRVVDGYVN.

D81 lines the Mg(2+) pocket. C122 provides a ligand contact to [2Fe-2S] cluster. Mg(2+)-binding residues include D123 and K124. K124 carries the N6-carboxylysine modification. Residue C197 coordinates [2Fe-2S] cluster. Position 493 (E493) interacts with Mg(2+). S519 functions as the Proton acceptor in the catalytic mechanism.

This sequence belongs to the IlvD/Edd family. In terms of assembly, homodimer. The cofactor is [2Fe-2S] cluster. Requires Mg(2+) as cofactor.

The catalysed reaction is (2R)-2,3-dihydroxy-3-methylbutanoate = 3-methyl-2-oxobutanoate + H2O. The enzyme catalyses (2R,3R)-2,3-dihydroxy-3-methylpentanoate = (S)-3-methyl-2-oxopentanoate + H2O. The protein operates within amino-acid biosynthesis; L-isoleucine biosynthesis; L-isoleucine from 2-oxobutanoate: step 3/4. It functions in the pathway amino-acid biosynthesis; L-valine biosynthesis; L-valine from pyruvate: step 3/4. Its function is as follows. Functions in the biosynthesis of branched-chain amino acids. Catalyzes the dehydration of (2R,3R)-2,3-dihydroxy-3-methylpentanoate (2,3-dihydroxy-3-methylvalerate) into 2-oxo-3-methylpentanoate (2-oxo-3-methylvalerate) and of (2R)-2,3-dihydroxy-3-methylbutanoate (2,3-dihydroxyisovalerate) into 2-oxo-3-methylbutanoate (2-oxoisovalerate), the penultimate precursor to L-isoleucine and L-valine, respectively. This chain is Dihydroxy-acid dehydratase, found in Corynebacterium aurimucosum (strain ATCC 700975 / DSM 44827 / CIP 107346 / CN-1) (Corynebacterium nigricans).